Reading from the N-terminus, the 345-residue chain is Sesquiterpene synthase PILCRDRAFT_825684 (345 aa).

Mg(2+) contacts are provided by Asp-91, Asn-226, Ser-230, and Glu-234. The short motif at 91-95 is the DDXXD motif element; it reads DELTD. Residues Arg-316 and Tyr-317 each coordinate (2E,6E)-farnesyl diphosphate.

This sequence belongs to the terpene synthase family. The cofactor is Mg(2+).

It catalyses the reaction (2E,6E)-farnesyl diphosphate = viridiflorene + diphosphate. Its function is as follows. Terpene cyclase that catalyzes the cyclization of farnesyl diphosphate (FPP) to various sesquiterpenes, including beta-elemene, viridiflorene and gamma-cadinene. Gamma-cadinene is the major product of PILCRDRAFT_825684. The polypeptide is Sesquiterpene synthase PILCRDRAFT_825684 (Piloderma croceum (strain F 1598)).